Reading from the N-terminus, the 417-residue chain is Cytoplasmic tRNA 2-thiolation protein 2 (417 aa).

A compositionally biased stretch (acidic residues) spans 1 to 11 (MCSIVEDDFGD). A disordered region spans residues 1–24 (MCSIVEDDFGDEGGAHAMKEDTPQ). The span at 13 to 22 (GGAHAMKEDT) shows a compositional bias: basic and acidic residues.

It belongs to the CTU2/NCS2 family.

It is found in the cytoplasm. It functions in the pathway tRNA modification; 5-methoxycarbonylmethyl-2-thiouridine-tRNA biosynthesis. In terms of biological role, plays a central role in 2-thiolation of mcm(5)S(2)U at tRNA wobble positions of tRNA(Lys), tRNA(Glu) and tRNA(Gln). May act by forming a heterodimer with NCS6/CTU1 that ligates sulfur from thiocarboxylated URM1 onto the uridine of tRNAs at wobble position. The chain is Cytoplasmic tRNA 2-thiolation protein 2 from Anopheles gambiae (African malaria mosquito).